Consider the following 340-residue polypeptide: Uroporphyrinogen decarboxylase (340 aa).

Substrate contacts are provided by residues 21-25, Phe40, Asp71, Tyr147, Ser202, and His316; that span reads RQAGR.

This sequence belongs to the uroporphyrinogen decarboxylase family. In terms of assembly, homodimer.

It localises to the cytoplasm. The enzyme catalyses uroporphyrinogen III + 4 H(+) = coproporphyrinogen III + 4 CO2. The protein operates within porphyrin-containing compound metabolism; protoporphyrin-IX biosynthesis; coproporphyrinogen-III from 5-aminolevulinate: step 4/4. Catalyzes the decarboxylation of four acetate groups of uroporphyrinogen-III to yield coproporphyrinogen-III. The sequence is that of Uroporphyrinogen decarboxylase from Helicobacter hepaticus (strain ATCC 51449 / 3B1).